The chain runs to 455 residues: ATP-dependent protease ATPase subunit HslU (455 aa).

ATP contacts are provided by residues valine 23, 65–70 (GVGKTE), aspartate 266, glutamate 333, and arginine 405.

The protein belongs to the ClpX chaperone family. HslU subfamily. A double ring-shaped homohexamer of HslV is capped on each side by a ring-shaped HslU homohexamer. The assembly of the HslU/HslV complex is dependent on binding of ATP.

The protein localises to the cytoplasm. Functionally, ATPase subunit of a proteasome-like degradation complex; this subunit has chaperone activity. The binding of ATP and its subsequent hydrolysis by HslU are essential for unfolding of protein substrates subsequently hydrolyzed by HslV. HslU recognizes the N-terminal part of its protein substrates and unfolds these before they are guided to HslV for hydrolysis. The sequence is that of ATP-dependent protease ATPase subunit HslU from Xanthomonas oryzae pv. oryzae (strain MAFF 311018).